The primary structure comprises 152 residues: Transcriptional repressor NrdR (152 aa).

A zinc finger lies at 3 to 34; it reads CPFCNAADSKVIDSRLAAEGCQIRRRRECVSC. Residues 49–139 enclose the ATP-cone domain; sequence PRVIKSNGKN…VYQDFQDVEA (91 aa).

Belongs to the NrdR family. Requires Zn(2+) as cofactor.

Its function is as follows. Negatively regulates transcription of bacterial ribonucleotide reductase nrd genes and operons by binding to NrdR-boxes. In Acinetobacter baumannii (strain AB0057), this protein is Transcriptional repressor NrdR.